Here is a 544-residue protein sequence, read N- to C-terminus: Chaperonin GroEL 1 (544 aa).

Residues Thr29–Pro32, Lys50, Asp86–Thr90, Gly414, and Asp494 each bind ATP.

This sequence belongs to the chaperonin (HSP60) family. As to quaternary structure, forms a cylinder of 14 subunits composed of two heptameric rings stacked back-to-back. Interacts with the co-chaperonin GroES.

It localises to the cytoplasm. The enzyme catalyses ATP + H2O + a folded polypeptide = ADP + phosphate + an unfolded polypeptide.. Functionally, together with its co-chaperonin GroES, plays an essential role in assisting protein folding. The GroEL-GroES system forms a nano-cage that allows encapsulation of the non-native substrate proteins and provides a physical environment optimized to promote and accelerate protein folding. In Psychromonas ingrahamii (strain DSM 17664 / CCUG 51855 / 37), this protein is Chaperonin GroEL 1.